Here is an 86-residue protein sequence, read N- to C-terminus: Anti-adapter protein IraP (86 aa).

The stretch at Met1–Met36 forms a coiled coil.

This sequence belongs to the IraP family. In terms of assembly, interacts with RssB.

It is found in the cytoplasm. In terms of biological role, inhibits RpoS proteolysis by regulating RssB activity, thereby increasing the stability of the sigma stress factor RpoS especially during phosphate starvation, but also in stationary phase and during nitrogen starvation. Its effect on RpoS stability is due to its interaction with RssB, which probably blocks the interaction of RssB with RpoS, and the consequent delivery of the RssB-RpoS complex to the ClpXP protein degradation pathway. In Shigella sonnei (strain Ss046), this protein is Anti-adapter protein IraP.